The chain runs to 1143 residues: DNA polymerase II large subunit (1143 aa).

This sequence belongs to the archaeal DNA polymerase II family. As to quaternary structure, heterodimer of a large subunit and a small subunit.

It catalyses the reaction DNA(n) + a 2'-deoxyribonucleoside 5'-triphosphate = DNA(n+1) + diphosphate. The catalysed reaction is Exonucleolytic cleavage in the 3'- to 5'-direction to yield nucleoside 5'-phosphates.. Its function is as follows. Possesses two activities: a DNA synthesis (polymerase) and an exonucleolytic activity that degrades single-stranded DNA in the 3'- to 5'-direction. Has a template-primer preference which is characteristic of a replicative DNA polymerase. This Archaeoglobus fulgidus (strain ATCC 49558 / DSM 4304 / JCM 9628 / NBRC 100126 / VC-16) protein is DNA polymerase II large subunit (polC).